We begin with the raw amino-acid sequence, 80 residues long: MSFEVFEKLESKVQQALDTITLLQMEIEELKEKNDALNQEVQGARESREALVRENEELKQEQSSWQERLRALLGKMEDVQ.

Residues 3 to 80 (FEVFEKLESK…ALLGKMEDVQ (78 aa)) adopt a coiled-coil conformation.

The protein belongs to the ZapB family. As to quaternary structure, homodimer. The ends of the coiled-coil dimer bind to each other, forming polymers. Interacts with FtsZ.

The protein localises to the cytoplasm. Functionally, non-essential, abundant cell division factor that is required for proper Z-ring formation. It is recruited early to the divisome by direct interaction with FtsZ, stimulating Z-ring assembly and thereby promoting cell division earlier in the cell cycle. Its recruitment to the Z-ring requires functional FtsA or ZipA. The chain is Cell division protein ZapB from Proteus mirabilis (strain HI4320).